The sequence spans 450 residues: MRECISIHVGQAGVQIGNACWELYCLEHGIQPDGQMPSDKTIGGGDDSFNTFFSETGAGKHVPRAVFVDLEPTVVDEVRTGTYRQLFHPEQLITGKEDAASNYARGHYTIGKEIVDLVLDRIRKLADLCTGLQGFLIFHSFGGGTGSGFASLLMERLSVDYSKKSKLEFAIYPAPQVSTAVVEPYNSILTTHTTLEHSDCAFMVDNEAIYDICRRNLDIERPTYTNLNRLIGQIVSSITASLRFDGALNVDLTEFQTNLVPYPRIHFPLATYAPVISAEKAYHEQLSVAEITNACFEPANQMVKCDPRHGKYMACCMLYRGDVVPKDVNAAIATIKTKRTIQFVDWCPTGFKVGINYQPPTVVPGGDLAKVQRAVCMLSNTTAIAEAWARLVHKFDLMYAKWAFVHWYVGEGMEEGEFSEAREDLAALEKDCEEVGVDSVEAEAEEGEAY.

Residues 1–4 (MREC) carry the MREC motif motif. Residue Gln-11 participates in GTP binding. Position 40 is an N6-acetyllysine (Lys-40). GTP-binding residues include Glu-71, Ser-140, Gly-144, Thr-145, Thr-179, Asn-206, and Asn-228. Glu-71 is a Mg(2+) binding site. The active site involves Glu-254. At Tyr-282 the chain carries 3'-nitrotyrosine. Ser-439 is modified (phosphoserine). Tyr-450 is subject to 3'-nitrotyrosine.

Belongs to the tubulin family. As to quaternary structure, dimer of alpha and beta chains. A typical microtubule is a hollow water-filled tube with an outer diameter of 25 nm and an inner diameter of 15 nM. Alpha-beta heterodimers associate head-to-tail to form protofilaments running lengthwise along the microtubule wall with the beta-tubulin subunit facing the microtubule plus end conferring a structural polarity. Microtubules usually have 13 protofilaments but different protofilament numbers can be found in some organisms and specialized cells. The cofactor is Mg(2+). In terms of processing, some glutamate residues at the C-terminus are polyglutamylated, resulting in polyglutamate chains on the gamma-carboxyl group. Polyglutamylation plays a key role in microtubule severing by spastin (SPAST). SPAST preferentially recognizes and acts on microtubules decorated with short polyglutamate tails: severing activity by SPAST increases as the number of glutamates per tubulin rises from one to eight, but decreases beyond this glutamylation threshold. Glutamylation is also involved in cilia motility. Some glutamate residues at the C-terminus are monoglycylated but not polyglycylated due to the absence of functional TTLL10 in human. Monoglycylation is mainly limited to tubulin incorporated into cilia and flagella axonemes, which is required for their stability and maintenance. Flagella glycylation controls sperm motility. Both polyglutamylation and monoglycylation can coexist on the same protein on adjacent residues, and lowering glycylation levels increases polyglutamylation, and reciprocally. Post-translationally, acetylation of alpha chains at Lys-40 is located inside the microtubule lumen. This modification has been correlated with increased microtubule stability, intracellular transport and ciliary assembly. In terms of processing, methylation of alpha chains at Lys-40 is found in mitotic microtubules and is required for normal mitosis and cytokinesis contributing to genomic stability. Nitration of Tyr-450 is irreversible and interferes with normal dynein intracellular distribution. Post-translationally, undergoes a tyrosination/detyrosination cycle, the cyclic removal and re-addition of a C-terminal tyrosine residue by the enzymes tubulin tyrosine carboxypeptidase (MATCAP1/KIAA0895L, VASH1 or VASH2) and tubulin tyrosine ligase (TTL), respectively. In terms of processing, tyrosination promotes microtubule interaction with CAP-Gly domain-containing proteins such as CLIP1, CLIP2 and DCTN1. Tyrosination regulates the initiation of dynein-dynactin motility via interaction with DCTN1, which brings the dynein-dynactin complex into contact with microtubules. In neurons, tyrosinated tubulins mediate the initiation of retrograde vesicle transport. Detyrosination is involved in metaphase plate congression by guiding chromosomes during mitosis: detyrosination promotes interaction with CENPE, promoting pole-proximal transport of chromosomes toward the equator. Detyrosination increases microtubules-dependent mechanotransduction in dystrophic cardiac and skeletal muscle. In cardiomyocytes, detyrosinated microtubules are required to resist to contractile compression during contraction: detyrosination promotes association with desmin (DES) at force-generating sarcomeres, leading to buckled microtubules and mechanical resistance to contraction.

The protein localises to the cytoplasm. It localises to the cytoskeleton. It catalyses the reaction GTP + H2O = GDP + phosphate + H(+). Functionally, tubulin is the major constituent of microtubules, a cylinder consisting of laterally associated linear protofilaments composed of alpha- and beta-tubulin heterodimers. Microtubules grow by the addition of GTP-tubulin dimers to the microtubule end, where a stabilizing cap forms. Below the cap, tubulin dimers are in GDP-bound state, owing to GTPase activity of alpha-tubulin. The polypeptide is Tubulin alpha-3E chain (TUBA3E) (Homo sapiens (Human)).